The primary structure comprises 148 residues: uncharacterized protein (148 aa).

CBS domains follow at residues 8–68 (MTAD…PNSQ) and 74–130 (MTEK…ERAG). Residues 127–148 (ERAGSALSDISEGDNREEGFFH) form a disordered region. The span at 139–148 (GDNREEGFFH) shows a compositional bias: basic and acidic residues.

This is an uncharacterized protein from Bacillus subtilis (strain 168).